Consider the following 122-residue polypeptide: Large ribosomal subunit protein uL18 (122 aa).

It belongs to the universal ribosomal protein uL18 family. Part of the 50S ribosomal subunit; part of the 5S rRNA/L5/L18/L25 subcomplex. Contacts the 5S and 23S rRNAs.

Its function is as follows. This is one of the proteins that bind and probably mediate the attachment of the 5S RNA into the large ribosomal subunit, where it forms part of the central protuberance. In Mycobacterium tuberculosis (strain ATCC 25177 / H37Ra), this protein is Large ribosomal subunit protein uL18.